Consider the following 308-residue polypeptide: Porphobilinogen deaminase (308 aa).

Cys240 carries the S-(dipyrrolylmethanemethyl)cysteine modification.

It belongs to the HMBS family. Monomer. The cofactor is dipyrromethane.

It catalyses the reaction 4 porphobilinogen + H2O = hydroxymethylbilane + 4 NH4(+). The protein operates within porphyrin-containing compound metabolism; protoporphyrin-IX biosynthesis; coproporphyrinogen-III from 5-aminolevulinate: step 2/4. Functionally, tetrapolymerization of the monopyrrole PBG into the hydroxymethylbilane pre-uroporphyrinogen in several discrete steps. The chain is Porphobilinogen deaminase from Campylobacter lari (strain RM2100 / D67 / ATCC BAA-1060).